Reading from the N-terminus, the 322-residue chain is 8-oxo-(d)GTP phosphatase (322 aa).

The disordered stretch occupies residues M1–K21. Residues H22–V156 form the Nudix hydrolase domain. Residues R55–Y58, D60, and K65–K67 each bind substrate. Positions 65, 81, and 85 each coordinate Mg(2+). A Nudix box motif is present at residues G66–G87. 4 residues coordinate substrate: Y101, K108, E127, and Y145. E127 provides a ligand contact to Mg(2+).

The protein belongs to the Nudix hydrolase family. As to quaternary structure, forms head-to-tail homodimers. Mg(2+) serves as cofactor.

The catalysed reaction is 8-oxo-dGTP + H2O = 8-oxo-dGDP + phosphate + H(+). It carries out the reaction 8-oxo-GTP + H2O = 8-oxo-GDP + phosphate + H(+). It catalyses the reaction 8-oxo-dGDP + H2O = 8-oxo-dGMP + phosphate + H(+). The enzyme catalyses 8-oxo-GDP + H2O = 8-oxo-GMP + phosphate + H(+). The catalysed reaction is P(1),P(6)-bis(5'-adenosyl) hexaphosphate + H2O = 2 ATP + 2 H(+). It carries out the reaction P(1),P(5)-bis(5'-adenosyl) pentaphosphate + H2O = ADP + ATP + 2 H(+). It catalyses the reaction P(1),P(4)-bis(5'-adenosyl) tetraphosphate + H2O = AMP + ATP + 2 H(+). With respect to regulation, ap4A hydrolysis is inhibited by fluoride ions. Functionally, catalyzes the conversion of 8-oxo-dGTP to 8-oxo-dGDP, and 8-oxo-GTP to 8-oxo-GDP. At high enzyme concentrations, can also catalyze the conversion of 8-oxo-dGDP to 8-oxo-dGMP, and 8-oxo-GDP to 8-oxo-GMP. In addition, catalyzes the hydrolysis of the diadenosine polyphosphates diadenosine hexaphosphate (Ap6A), diadenosine pentaphosphate (Ap5A) and diadenosine tetraphosphate (Ap4A). This Mycolicibacterium smegmatis (strain ATCC 700084 / mc(2)155) (Mycobacterium smegmatis) protein is 8-oxo-(d)GTP phosphatase.